The chain runs to 302 residues: Pantothenate synthetase (302 aa).

An ATP-binding site is contributed by 47 to 54; that stretch reads MGALHEGH. His-54 (proton donor) is an active-site residue. Position 79 (Gln-79) interacts with (R)-pantoate. Gln-79 lines the beta-alanine pocket. Residue 165 to 168 participates in ATP binding; it reads GEKD. Gln-171 serves as a coordination point for (R)-pantoate. ATP-binding positions include Val-194 and 202–205; that span reads LSSR.

It belongs to the pantothenate synthetase family. As to quaternary structure, homodimer.

It localises to the cytoplasm. The catalysed reaction is (R)-pantoate + beta-alanine + ATP = (R)-pantothenate + AMP + diphosphate + H(+). The protein operates within cofactor biosynthesis; (R)-pantothenate biosynthesis; (R)-pantothenate from (R)-pantoate and beta-alanine: step 1/1. In terms of biological role, catalyzes the condensation of pantoate with beta-alanine in an ATP-dependent reaction via a pantoyl-adenylate intermediate. This chain is Pantothenate synthetase, found in Saccharopolyspora erythraea (strain ATCC 11635 / DSM 40517 / JCM 4748 / NBRC 13426 / NCIMB 8594 / NRRL 2338).